The following is a 1105-amino-acid chain: Integrator complex subunit 2 (1105 aa).

A helical membrane pass occupies residues 822-842 (FVFCSPYLLMILLRILKGSLA).

Belongs to the Integrator subunit 2 family. Belongs to the multiprotein complex Integrator, at least composed of IntS1, IntS2, IntS3, IntS4, omd/IntS5, IntS6, defl/IntS7, IntS8, IntS9, IntS10, IntS11, IntS12, asun/IntS13, IntS14 and IntS15. The core complex associates with protein phosphatase 2A subunits mts/PP2A and Pp2A-29B, to form the Integrator-PP2A (INTAC) complex.

It localises to the nucleus membrane. It is found in the nucleus. Its function is as follows. Component of the integrator complex, a multiprotein complex that terminates RNA polymerase II (Pol II) transcription in the promoter-proximal region of genes. The integrator complex provides a quality checkpoint during transcription elongation by driving premature transcription termination of transcripts that are unfavorably configured for transcriptional elongation: the complex terminates transcription by (1) catalyzing dephosphorylation of the C-terminal domain (CTD) of Pol II subunit Polr2A/Rbp1 and Spt5, and (2) degrading the exiting nascent RNA transcript via endonuclease activity. The integrator complex is also involved in the 3'-end processing of the U7 snRNA, and also the spliceosomal snRNAs U1, U2, U4 and U5. In Drosophila melanogaster (Fruit fly), this protein is Integrator complex subunit 2.